Consider the following 409-residue polypeptide: MNTRADVVVVGAGPAGSAAAAWAARAGRDVVVVDAAQFPRDKACGDGLTPRAVAELQRLGMASWLDTRIRHHGLRMSGFGADVEIPWPGPSFPATSSAVPRTELDDRIRSVAADDGAKMMLGTKVVDVTHDSSGRVDAVVLDDGNTVGCAQLIVADGARSTLGRVLGRTWHRETVYGVAIRGYIASPRASEPWITSHLELRSPEGKVLPGYGWMFPLGNGEVNIGVGALATAKRPADAALRPLMSYYADLRREEWGLVGEPRAGLSALLPMGGAVSGVAGPNWMLIGDAAACVNPLNGEGIDYGLETGRLAAELMTSGGVTDYSSAWPTLLQEHYARGFSVARRLALLLTLPRFLQVTGPVAMRSATLMTIAVRVMGNLVTDEDADWIARVWRTAGLASRRIDQRVPFS.

Residues 11–15 (GAGPA), 44–47 (CGDG), R101, V125, D288, and 300–301 (GI) each bind FAD.

The protein belongs to the geranylgeranyl reductase family. FAD is required as a cofactor.

It carries out the reaction menaquinone-9 + AH2 = beta-dihydromenaquinone-9 + A. The protein operates within quinol/quinone metabolism; menaquinone biosynthesis. Its function is as follows. Catalyzes the reduction of a single double bond in the isoprenoid tail of menaquinone (MK-9) in M.smegmatis, likely the beta-isoprene unit, forming the predominant form of menaquinone found in mycobacteria, MK-9(II-H2). This Mycolicibacterium smegmatis (strain ATCC 700084 / mc(2)155) (Mycobacterium smegmatis) protein is Menaquinone reductase.